Reading from the N-terminus, the 109-residue chain is Cell division protein ZapA (109 aa).

Residues 21 to 99 are a coiled coil; the sequence is PEQQEALNQA…IEQALLEQGK (79 aa).

It belongs to the ZapA family. Type 1 subfamily. Homodimer. Interacts with FtsZ.

The protein localises to the cytoplasm. Functionally, activator of cell division through the inhibition of FtsZ GTPase activity, therefore promoting FtsZ assembly into bundles of protofilaments necessary for the formation of the division Z ring. It is recruited early at mid-cell but it is not essential for cell division. In Pectobacterium atrosepticum (strain SCRI 1043 / ATCC BAA-672) (Erwinia carotovora subsp. atroseptica), this protein is Cell division protein ZapA.